The following is a 35-amino-acid chain: Photosystem II reaction center protein M (35 aa).

A helical transmembrane segment spans residues 7–27; that stretch reads GLLATILVILVPSIFLVILYV.

Belongs to the PsbM family. In terms of assembly, PSII is composed of 1 copy each of membrane proteins PsbA, PsbB, PsbC, PsbD, PsbE, PsbF, PsbH, PsbI, PsbJ, PsbK, PsbL, PsbM, PsbT, PsbX, PsbY, PsbZ, Psb30/Ycf12, peripheral proteins PsbO, CyanoQ (PsbQ), PsbU, PsbV and a large number of cofactors. It forms dimeric complexes.

The protein resides in the cellular thylakoid membrane. In terms of biological role, one of the components of the core complex of photosystem II (PSII). PSII is a light-driven water:plastoquinone oxidoreductase that uses light energy to abstract electrons from H(2)O, generating O(2) and a proton gradient subsequently used for ATP formation. It consists of a core antenna complex that captures photons, and an electron transfer chain that converts photonic excitation into a charge separation. This subunit is found at the monomer-monomer interface. The polypeptide is Photosystem II reaction center protein M (Synechococcus sp. (strain JA-3-3Ab) (Cyanobacteria bacterium Yellowstone A-Prime)).